We begin with the raw amino-acid sequence, 152 residues long: Small ribosomal subunit protein uS11 (152 aa).

This sequence belongs to the universal ribosomal protein uS11 family. As to quaternary structure, component of the small ribosomal subunit. Part of the small subunit (SSU) processome, composed of more than 70 proteins and the RNA chaperone small nucleolar RNA (snoRNA) U3.

It is found in the cytoplasm. The protein localises to the nucleus. The protein resides in the nucleolus. In terms of biological role, component of the small ribosomal subunit. The ribosome is a large ribonucleoprotein complex responsible for the synthesis of proteins in the cell. Part of the small subunit (SSU) processome, first precursor of the small eukaryotic ribosomal subunit. During the assembly of the SSU processome in the nucleolus, many ribosome biogenesis factors, an RNA chaperone and ribosomal proteins associate with the nascent pre-rRNA and work in concert to generate RNA folding, modifications, rearrangements and cleavage as well as targeted degradation of pre-ribosomal RNA by the RNA exosome. This is Small ribosomal subunit protein uS11 (rps-14) from Caenorhabditis elegans.